Here is a 936-residue protein sequence, read N- to C-terminus: Sine oculis-binding protein homolog A (936 aa).

Over residues 1–14 the composition is skewed to basic and acidic residues; sequence MAEMEKEGRPPESK. Disordered regions lie at residues 1–46 and 108–151; these read MAEM…GQAG and ASTL…HGGL. Positions 108–144 are enriched in polar residues; sequence ASTLENSSGSPPHANSSGSTPTSRNGVTAESSVNPSS. 2 consecutive FCS-type zinc fingers follow at residues 169 to 207 and 247 to 287; these read EDSSNVQIMCAWCQKVGVKRYSLSMGSELKSFCSEKCFA and LKTN…KCLN. Disordered regions lie at residues 311 to 330, 336 to 424, 486 to 511, 574 to 632, 697 to 727, and 842 to 877; these read LPTSDTKSESGAGVQLLTPE, LSEL…VMTP, SPHLHPSSTPTLSGNPPGIMPPHPAA, NPQR…KQTE, PPPALLGETELDGSTSISTGTAKDDHRDTYS, and DSAGKRCSNDQSAITTGTGDDKSQSPEDDPSGEDHA. The span at 349–382 shows a compositional bias: low complexity; sequence GATIAGPSGSTSGSPSEAGTVCSSSSSSSSSSSS. Positions 395–404 are enriched in pro residues; the sequence is SLPPPHPPPI. Composition is skewed to polar residues over residues 617 to 632, 708 to 717, and 850 to 859; these read PPNSDTLSPEFSKQTE, DGSTSISTGT, and NDQSAITTGT.

It belongs to the SOBP family.

Its function is as follows. Implicated in development of the cochlea. This Danio rerio (Zebrafish) protein is Sine oculis-binding protein homolog A (sobpa).